A 301-amino-acid chain; its full sequence is Oxygen-dependent coproporphyrinogen-III oxidase (301 aa).

Ser90 is a substrate binding site. Residues His94 and His104 each contribute to the a divalent metal cation site. Catalysis depends on His104, which acts as the Proton donor. 106 to 108 (NVR) contacts substrate. 2 residues coordinate a divalent metal cation: His143 and His173. An important for dimerization region spans residues 238 to 273 (YVEFNLVWDRGTLFGLQSGGRTESILMSLPPVVKWR). A substrate-binding site is contributed by 256–258 (GGR).

This sequence belongs to the aerobic coproporphyrinogen-III oxidase family. Homodimer. Requires a divalent metal cation as cofactor.

It localises to the cytoplasm. It catalyses the reaction coproporphyrinogen III + O2 + 2 H(+) = protoporphyrinogen IX + 2 CO2 + 2 H2O. Its pathway is porphyrin-containing compound metabolism; protoporphyrin-IX biosynthesis; protoporphyrinogen-IX from coproporphyrinogen-III (O2 route): step 1/1. In terms of biological role, involved in the heme biosynthesis. Catalyzes the aerobic oxidative decarboxylation of propionate groups of rings A and B of coproporphyrinogen-III to yield the vinyl groups in protoporphyrinogen-IX. This chain is Oxygen-dependent coproporphyrinogen-III oxidase, found in Nitrosomonas europaea (strain ATCC 19718 / CIP 103999 / KCTC 2705 / NBRC 14298).